A 490-amino-acid chain; its full sequence is Glutamate--tRNA ligase (490 aa).

Residues 12–22 carry the 'HIGH' region motif; sequence PSPTGTPHVGL. The 'KMSKS' region motif lies at 256-260; it reads KLSKR. Position 259 (Lys259) interacts with ATP.

Belongs to the class-I aminoacyl-tRNA synthetase family. Glutamate--tRNA ligase type 1 subfamily. In terms of assembly, monomer.

It is found in the cytoplasm. The catalysed reaction is tRNA(Glu) + L-glutamate + ATP = L-glutamyl-tRNA(Glu) + AMP + diphosphate. In terms of biological role, catalyzes the attachment of glutamate to tRNA(Glu) in a two-step reaction: glutamate is first activated by ATP to form Glu-AMP and then transferred to the acceptor end of tRNA(Glu). The polypeptide is Glutamate--tRNA ligase (Mycobacterium sp. (strain JLS)).